The chain runs to 621 residues: MSLDIAKYPTLALAENPDELRSLPKESLPKLCDELRQYLLDSVSRSSGHFASGLGTVELTVALHYVYQTPFDHLVWDVGHQAYPHKILTGRRDKIATIRQKNGLHPFPWRAESEYDVLSVGHSSTSISAGLGMAVAAAREGKNRRTVCVIGDGAITAGMAFEAMNHAGDIDPDMLVVLNDNEMSISENVGALNNHLAQLLSGKLYSTLREGGKKVLSGLPPIKELVKRTEEHLKGMVVPGTLFEELGFNYIGPVDGHDVQGLVATLKNMRDLKGPQLLHIMTKKGRGYAPAEKDPISFHAVPKFDPASGTLPKSAGGLPTYSKVFGDWLCETAAKDSSLMAITPAMREGSGMVQFSRDYPQQYFDVAIAEQHAVTFAAGLAIGGYKPVVAIYSTFLQRAYDQLIHDVAIQKLPVMFAIDRGGIVGADGQTHQGAFDLSFMRCIPTMVIMTPSDENECRQMLYTGYHYNEGPSAVRYPRGNGTGAPLEPLNSLPIGKGVVRREGEKLAILNFGTLLPEAAQVAETLNATLVDMRFVKPLDEQLILELAASHDALVTLEENAIMGGAGSGVNELLMARRRVVPVLNIGLPDFFVSQGSQEEVRSDLGLDAAGIQRQIEVWLAQ.

Residues His-80 and 121-123 (GHS) each bind thiamine diphosphate. Asp-152 provides a ligand contact to Mg(2+). Thiamine diphosphate contacts are provided by residues 153-154 (GA), Asn-181, Tyr-288, and Glu-370. Mg(2+) is bound at residue Asn-181.

Belongs to the transketolase family. DXPS subfamily. Homodimer. Mg(2+) is required as a cofactor. Thiamine diphosphate serves as cofactor.

The enzyme catalyses D-glyceraldehyde 3-phosphate + pyruvate + H(+) = 1-deoxy-D-xylulose 5-phosphate + CO2. It participates in metabolic intermediate biosynthesis; 1-deoxy-D-xylulose 5-phosphate biosynthesis; 1-deoxy-D-xylulose 5-phosphate from D-glyceraldehyde 3-phosphate and pyruvate: step 1/1. In terms of biological role, catalyzes the acyloin condensation reaction between C atoms 2 and 3 of pyruvate and glyceraldehyde 3-phosphate to yield 1-deoxy-D-xylulose-5-phosphate (DXP). This chain is 1-deoxy-D-xylulose-5-phosphate synthase, found in Serratia proteamaculans (strain 568).